The sequence spans 449 residues: Maltoporin (449 aa).

A signal peptide spans 1-24 (MITLRKLPLAVAVAAGVMSAQAMA).

Belongs to the porin LamB (TC 1.B.3) family. In terms of assembly, homotrimer formed of three 18-stranded antiparallel beta-barrels, containing three independent channels.

Its subcellular location is the cell outer membrane. It catalyses the reaction beta-maltose(in) = beta-maltose(out). Involved in the transport of maltose and maltodextrins. The chain is Maltoporin from Citrobacter koseri (strain ATCC BAA-895 / CDC 4225-83 / SGSC4696).